A 336-amino-acid polypeptide reads, in one-letter code: Acetyl-coenzyme A carboxylase carboxyl transferase subunit alpha (336 aa).

Residues 48–308 (ALEAKVESLR…KSMLIEELQG (261 aa)) form the CoA carboxyltransferase C-terminal domain.

Belongs to the AccA family. In terms of assembly, acetyl-CoA carboxylase is a heterohexamer composed of biotin carboxyl carrier protein (AccB), biotin carboxylase (AccC) and two subunits each of ACCase subunit alpha (AccA) and ACCase subunit beta (AccD).

The protein localises to the cytoplasm. The enzyme catalyses N(6)-carboxybiotinyl-L-lysyl-[protein] + acetyl-CoA = N(6)-biotinyl-L-lysyl-[protein] + malonyl-CoA. It functions in the pathway lipid metabolism; malonyl-CoA biosynthesis; malonyl-CoA from acetyl-CoA: step 1/1. Its function is as follows. Component of the acetyl coenzyme A carboxylase (ACC) complex. First, biotin carboxylase catalyzes the carboxylation of biotin on its carrier protein (BCCP) and then the CO(2) group is transferred by the carboxyltransferase to acetyl-CoA to form malonyl-CoA. In Chlorobaculum parvum (strain DSM 263 / NCIMB 8327) (Chlorobium vibrioforme subsp. thiosulfatophilum), this protein is Acetyl-coenzyme A carboxylase carboxyl transferase subunit alpha.